A 257-amino-acid polypeptide reads, in one-letter code: MLAKRIVPCLDVKDGCVVKGVQFRNHEIVGDIVPLAARYAAEGADELVFYDITASAHDRVVDKSWVSRVAEQIDIPFCVAGGIKTIGQARELLAFGADKISVNSPALSDPSLISRLQDEFGRQCIVIGIDSFYDAASDSYKVKQFTGDEAATKETAWYTQDWVEEVQKRGCGEIVLNVMNQDGVRGGYDIKQLSLVRQLCDVPLIASGGAGTMAHFRDVFIEAKVDAALAASVFHKAIINIGELKQYLAAEGIAIRQ.

Active-site residues include Asp11 and Asp130.

It belongs to the HisA/HisF family. Heterodimer of HisH and HisF.

It localises to the cytoplasm. The enzyme catalyses 5-[(5-phospho-1-deoxy-D-ribulos-1-ylimino)methylamino]-1-(5-phospho-beta-D-ribosyl)imidazole-4-carboxamide + L-glutamine = D-erythro-1-(imidazol-4-yl)glycerol 3-phosphate + 5-amino-1-(5-phospho-beta-D-ribosyl)imidazole-4-carboxamide + L-glutamate + H(+). The protein operates within amino-acid biosynthesis; L-histidine biosynthesis; L-histidine from 5-phospho-alpha-D-ribose 1-diphosphate: step 5/9. IGPS catalyzes the conversion of PRFAR and glutamine to IGP, AICAR and glutamate. The HisF subunit catalyzes the cyclization activity that produces IGP and AICAR from PRFAR using the ammonia provided by the HisH subunit. The protein is Imidazole glycerol phosphate synthase subunit HisF of Shewanella sp. (strain MR-4).